Reading from the N-terminus, the 250-residue chain is uncharacterized protein (250 aa).

The a divalent metal cation site is built by Glu97, Glu99, and Asp128.

Belongs to the FAH family.

This is an uncharacterized protein from Archaeoglobus fulgidus (strain ATCC 49558 / DSM 4304 / JCM 9628 / NBRC 100126 / VC-16).